The following is a 205-amino-acid chain: Small ribosomal subunit protein uS2 (205 aa).

The protein belongs to the universal ribosomal protein uS2 family.

The protein is Small ribosomal subunit protein uS2 of Methanoculleus marisnigri (strain ATCC 35101 / DSM 1498 / JR1).